Consider the following 308-residue polypeptide: Probable manganese-dependent inorganic pyrophosphatase (308 aa).

Mn(2+)-binding residues include H9, D13, D15, D75, H97, and D149.

The protein belongs to the PPase class C family. The cofactor is Mn(2+).

It localises to the cytoplasm. The catalysed reaction is diphosphate + H2O = 2 phosphate + H(+). This Listeria innocua serovar 6a (strain ATCC BAA-680 / CLIP 11262) protein is Probable manganese-dependent inorganic pyrophosphatase.